A 219-amino-acid polypeptide reads, in one-letter code: Small ribosomal subunit protein uS2m (219 aa).

The protein belongs to the universal ribosomal protein uS2 family. Component of the mitochondrial ribosome small subunit.

The protein localises to the mitochondrion. In Arabidopsis thaliana (Mouse-ear cress), this protein is Small ribosomal subunit protein uS2m (RPS2).